We begin with the raw amino-acid sequence, 325 residues long: NADH-quinone oxidoreductase subunit H (325 aa).

The next 9 membrane-spanning stretches (helical) occupy residues 11–31 (ILLS…CGAF), 50–69 (NRVG…KMFF), 81–101 (VIFT…FAIV), 114–134 (IGIL…LFAG), 154–174 (VSYE…AGSF), 186–206 (LWNV…GVAV), 237–257 (FFVG…TLFF), 265–285 (LPPF…FILI), and 304–324 (VCLP…LWQA).

The protein belongs to the complex I subunit 1 family. As to quaternary structure, NDH-1 is composed of 13 different subunits. Subunits NuoA, H, J, K, L, M, N constitute the membrane sector of the complex.

The protein localises to the cell inner membrane. It carries out the reaction a quinone + NADH + 5 H(+)(in) = a quinol + NAD(+) + 4 H(+)(out). NDH-1 shuttles electrons from NADH, via FMN and iron-sulfur (Fe-S) centers, to quinones in the respiratory chain. The immediate electron acceptor for the enzyme in this species is believed to be ubiquinone. Couples the redox reaction to proton translocation (for every two electrons transferred, four hydrogen ions are translocated across the cytoplasmic membrane), and thus conserves the redox energy in a proton gradient. This subunit may bind ubiquinone. The chain is NADH-quinone oxidoreductase subunit H from Salmonella arizonae (strain ATCC BAA-731 / CDC346-86 / RSK2980).